The sequence spans 609 residues: MPISKDKLILILGMVCLEQGHSETLSSIRNPDCGQSLVKPQPQNYFSLFSRIVGGSQVEKGSYPWQVSLKQKQKHICGGTIISSQWVITAAHCMANRNIALTLNVTAGEHDLSQAEPGEQTLAIETIIIHPQFSTRKPMIYDIALLKMAGTFQFGQFVRPVCLPEPGEHFNAGFICTTAGWGRLSEGGRLPQVLQQVNLPILTQEECEAVLLTLKNPITGKTFLCTGSPDGGRDACQGDSGGSLMCQNRKGAWTLAGVTSWGLGCGRSWRNNARKKEQGSPGIFTDLRRVLPWILKHIQTGHRRKSTKALCSEPDGLISGSEGELHFPESLHLYYESKQLCVWTFLVPEDMHMLLNLSHLDIESCHHNYLAMYSLEDRLVGKFCGENLPSSILIGSSSIRLRFISDATDYATGFNLTYKALKPRYHPDSGCRSLTILFEEGTIQSLHYPEDYSNMASCTWIFQAPNYCLIKLSFQSLEIEENGDCSSDYVTVHSDVEKEKEIARFCDYVIPSPVLSSSSVMLISFQSDENGTARGFQADISFISRADLNISISEDESVPLETWDLPPGAMEIFDAERDTHTKPPYEEDIGEMPAIDSGLLKQGERRGKH.

A signal peptide spans 1-22 (MPISKDKLILILGMVCLEQGHS). Residues 23-51 (ETLSSIRNPDCGQSLVKPQPQNYFSLFSR) constitute a propeptide, activation peptide. In terms of domain architecture, Peptidase S1 spans 52–299 (IVGGSQVEKG…VLPWILKHIQ (248 aa)). C77 and C93 are disulfide-bonded. H92 serves as the catalytic Charge relay system. N104 is a glycosylation site (N-linked (GlcNAc...) asparagine). Residue E119 participates in Ca(2+) binding. D142 functions as the Charge relay system in the catalytic mechanism. Intrachain disulfides connect C176–C246, C207–C225, C236–C265, and C311–C341. S240 functions as the Charge relay system in the catalytic mechanism. CUB domains are found at residues 311 to 421 (CSEP…YKAL) and 431 to 543 (CRSL…ISFI). An N-linked (GlcNAc...) asparagine glycan is attached at N356. The cysteines at positions 365 and 384 are disulfide-linked. N415 is a glycosylation site (N-linked (GlcNAc...) asparagine). 2 disulfides stabilise this stretch: C431–C458 and C485–C506. N530 and N549 each carry an N-linked (GlcNAc...) asparagine glycan. Residues 580-609 (HTKPPYEEDIGEMPAIDSGLLKQGERRGKH) are disordered.

The protein belongs to the peptidase S1 family. In terms of tissue distribution, only expressed in uterus tissue. Expressed in the initial segment (IS) of the caput epididymis, the region most proximal to the testis.

The protein localises to the secreted. May be required for sperm ADAM3 processing and consequential sperm fertilizing ability. In vitro, has an endopeptidase activity. In Mus musculus (Mouse), this protein is Ovochymase-2.